Here is a 558-residue protein sequence, read N- to C-terminus: Deleted in azoospermia protein 2 (558 aa).

Residues Met-1–Asn-10 show a composition bias toward polar residues. The segment at Met-1–Ser-27 is disordered. Residues Ser-11–Ser-27 are compositionally biased toward low complexity. An RRM domain is found at Asn-40 to Arg-115. 15 consecutive DAZ domains span residues Ala-167–Gln-190, Glu-191–Gln-214, Pro-215–Gln-238, Ala-239–Gln-262, Pro-263–Gln-286, Ala-287–Gln-310, Ala-311–Gln-334, Ala-335–Gln-358, Ala-359–Gln-382, Ala-383–Gln-406, Ala-407–Gln-430, Ala-431–Gln-454, Ala-455–Gln-478, Ala-479–Gln-502, and Ala-503–Gln-526.

The protein belongs to the RRM DAZ family. In terms of assembly, forms a heterodimer with BOLL and DAZL. Interacts with PUM2, DAZAP1, DAZAP2, DZIP1 and DZIP3. Testis specific.

The protein resides in the cytoplasm. Its subcellular location is the nucleus. RNA-binding protein that plays an essential role in spermatogenesis. May act by binding to the 3'-UTR of mRNAs and regulating their translation. The protein is Deleted in azoospermia protein 2 (DAZ2) of Homo sapiens (Human).